The chain runs to 198 residues: Na(+)-translocating NADH-quinone reductase subunit E (198 aa).

6 helical membrane-spanning segments follow: residues 11–31 (SIFI…FLAV), 39–59 (FGLG…NNLV), 77–97 (FLSF…LEMI), 110–130 (GIFL…SFMV), 140–160 (VVYG…LAGI), and 176–196 (LGIT…FSGV).

It belongs to the NqrDE/RnfAE family. In terms of assembly, composed of six subunits; NqrA, NqrB, NqrC, NqrD, NqrE and NqrF.

It is found in the cell inner membrane. It carries out the reaction a ubiquinone + n Na(+)(in) + NADH + H(+) = a ubiquinol + n Na(+)(out) + NAD(+). Its function is as follows. NQR complex catalyzes the reduction of ubiquinone-1 to ubiquinol by two successive reactions, coupled with the transport of Na(+) ions from the cytoplasm to the periplasm. NqrA to NqrE are probably involved in the second step, the conversion of ubisemiquinone to ubiquinol. The chain is Na(+)-translocating NADH-quinone reductase subunit E from Aliivibrio fischeri (strain ATCC 700601 / ES114) (Vibrio fischeri).